A 473-amino-acid polypeptide reads, in one-letter code: Photosystem II CP43 reaction center protein (473 aa).

Positions 1 to 14 (MKNLYSLRRFYHVE) are excised as a propeptide. T15 is modified (N-acetylthreonine). T15 carries the phosphothreonine modification. 5 consecutive transmembrane segments (helical) span residues 69–93 (LFEVAHFVPEKPMYEQGLILLPHLA), 134–155 (LVGPETLEESFPFFGYVWKDKN), 178–200 (KAMYFGGIYDTWAPGGGDVRIIS), 255–275 (KPWAWARRAFVWSGEAYLSYS), and 291–312 (WFNTTAYPSEFYGPTGPEASQS). Residue E367 participates in [CaMn4O5] cluster binding. A helical membrane pass occupies residues 447 to 471 (RARAAAAGFEKGIDRDNEPVLSMRP).

Belongs to the PsbB/PsbC family. PsbC subfamily. PSII is composed of 1 copy each of membrane proteins PsbA, PsbB, PsbC, PsbD, PsbE, PsbF, PsbH, PsbI, PsbJ, PsbK, PsbL, PsbM, PsbT, PsbX, PsbY, PsbZ, Psb30/Ycf12, at least 3 peripheral proteins of the oxygen-evolving complex and a large number of cofactors. It forms dimeric complexes. Binds multiple chlorophylls and provides some of the ligands for the Ca-4Mn-5O cluster of the oxygen-evolving complex. It may also provide a ligand for a Cl- that is required for oxygen evolution. PSII binds additional chlorophylls, carotenoids and specific lipids. is required as a cofactor.

The protein resides in the plastid. It is found in the chloroplast thylakoid membrane. Functionally, one of the components of the core complex of photosystem II (PSII). It binds chlorophyll and helps catalyze the primary light-induced photochemical processes of PSII. PSII is a light-driven water:plastoquinone oxidoreductase, using light energy to abstract electrons from H(2)O, generating O(2) and a proton gradient subsequently used for ATP formation. The polypeptide is Photosystem II CP43 reaction center protein (Chlorella vulgaris (Green alga)).